The chain runs to 331 residues: UPF0324 membrane protein SACOL0411 (331 aa).

The next 11 membrane-spanning stretches (helical) occupy residues 9–26, 31–48, 69–88, 93–115, 122–144, 154–176, 183–202, 217–234, 247–269, 273–295, and 308–330; these read FMIG…SFLA, ILDK…AILY, LLRF…DIIG, LLAI…NKLL, ALLL…APIF, SIGI…YAIF, YGAW…LAGG, LGRV…ILIM, ISIP…VTIP, LNIL…GLNV, and LMTI…HWLY.

It belongs to the UPF0324 family.

It is found in the cell membrane. The chain is UPF0324 membrane protein SACOL0411 from Staphylococcus aureus (strain COL).